The following is a 780-amino-acid chain: Mediator of RNA polymerase II transcription subunit 15 (780 aa).

An interaction with nhr-49 region spans residues 1-124 (MSEEDWPSPK…PQPTSAQARN (124 aa)). Positions 2–96 (SEEDWPSPKF…SPPCTTAALL (95 aa)) are interaction with sbp-1. 3 disordered regions span residues 91-152 (TTAA…APSA), 166-363 (PSPD…QGMM), and 564-597 (GPGP…GTPN). The span at 125 to 139 (PPVTVATTQASTTPS) shows a compositional bias: low complexity. Positions 225 to 245 (PPNGYGGYGMMNGPPGSGAPM) are enriched in gly residues. Residues 296-316 (QGATPTGPSSVLESLINQPQQ) show a composition bias toward polar residues. 2 stretches are compositionally biased toward low complexity: residues 333–353 (AAQR…QQQR) and 574–594 (SMSG…NPMG).

It belongs to the Mediator complex subunit 15 family. In terms of assembly, component of the Mediator complex. Interacts with nhr-49, nhr-64 and sbp-1. As to expression, expressed in the intestine and head neurons.

It localises to the nucleus. In terms of biological role, component of the Mediator complex, a coactivator involved in regulated gene transcription of nearly all RNA polymerase II-dependent genes. Mediator functions as a bridge to convey information from gene-specific regulatory proteins to the basal RNA polymerase II transcription machinery. Mediator is recruited to promoters by direct interactions with regulatory proteins and serves as a scaffold for the assembly of a functional preinitiation complex with RNA polymerase II and the general transcription factors. Required for regulated expression of genes controlling fatty acid desaturation by transcription factors including sbp-1 and nhr-49. Involved in the response to simulated microgravity, in concert with sbp-1, probably acting in the intestine. This chain is Mediator of RNA polymerase II transcription subunit 15 (mdt-15), found in Caenorhabditis elegans.